We begin with the raw amino-acid sequence, 261 residues long: Sulfur carrier protein FdhD (261 aa).

The active-site Cysteine persulfide intermediate is Cys105. Phe245–Arg250 serves as a coordination point for Mo-bis(molybdopterin guanine dinucleotide).

This sequence belongs to the FdhD family.

It localises to the cytoplasm. In terms of biological role, required for formate dehydrogenase (FDH) activity. Acts as a sulfur carrier protein that transfers sulfur from IscS to the molybdenum cofactor prior to its insertion into FDH. This is Sulfur carrier protein FdhD from Listeria monocytogenes serotype 4b (strain F2365).